A 72-amino-acid chain; its full sequence is Translation initiation factor IF-1 (72 aa).

Residues 1-72 (MSKDDSIEFE…TKGRITYRMK (72 aa)) enclose the S1-like domain.

Belongs to the IF-1 family. As to quaternary structure, component of the 30S ribosomal translation pre-initiation complex which assembles on the 30S ribosome in the order IF-2 and IF-3, IF-1 and N-formylmethionyl-tRNA(fMet); mRNA recruitment can occur at any time during PIC assembly.

It localises to the cytoplasm. In terms of biological role, one of the essential components for the initiation of protein synthesis. Stabilizes the binding of IF-2 and IF-3 on the 30S subunit to which N-formylmethionyl-tRNA(fMet) subsequently binds. Helps modulate mRNA selection, yielding the 30S pre-initiation complex (PIC). Upon addition of the 50S ribosomal subunit IF-1, IF-2 and IF-3 are released leaving the mature 70S translation initiation complex. The chain is Translation initiation factor IF-1 from Xanthomonas euvesicatoria pv. vesicatoria (strain 85-10) (Xanthomonas campestris pv. vesicatoria).